A 180-amino-acid polypeptide reads, in one-letter code: MAEDNLCALFFKLTVQGVTCSDGLKKHMENAEDELKPLLEHGPQGESMDIDEEEVSGAKRLLYLYVDCPTMMRCFFGRSMPYNCRGGTLLTDLPPYHADASPHEVSRGLGKATDFFSYEDAIRSAYFAAFSFSGPVRKLDQQLELTSTRGEPLTFSLYARSPGRLEPGELVRHGECKFAG.

As to expression, accumulates in young leaves and shoot tips.

Functionally, hydrolyzes cytokinin glucosides thus liberating free cytokinins. This chain is Cytokinin-beta-glucosidase (TROLC), found in Nicotiana tabacum (Common tobacco).